The chain runs to 239 residues: Large ribosomal subunit protein uL2 (239 aa).

A disordered region spans residues 202–239 (HGGGSHQHVGRPSTVARNTPPGRKVGHIAARRTGRRKG). Over residues 225-239 (KVGHIAARRTGRRKG) the composition is skewed to basic residues.

This sequence belongs to the universal ribosomal protein uL2 family. Part of the 50S ribosomal subunit. Forms a bridge to the 30S subunit in the 70S ribosome.

One of the primary rRNA binding proteins. Required for association of the 30S and 50S subunits to form the 70S ribosome, for tRNA binding and peptide bond formation. It has been suggested to have peptidyltransferase activity; this is somewhat controversial. Makes several contacts with the 16S rRNA in the 70S ribosome. The chain is Large ribosomal subunit protein uL2 from Desulfurococcus amylolyticus (strain DSM 18924 / JCM 16383 / VKM B-2413 / 1221n) (Desulfurococcus kamchatkensis).